The following is a 133-amino-acid chain: p53 and DNA damage-regulated protein 1 (133 aa).

The protein belongs to the prefoldin subunit beta family. As to quaternary structure, component of the PAQosome complex which is responsible for the biogenesis of several protein complexes and which consists of R2TP complex members RUVBL1, RUVBL2, RPAP3 and PIH1D1, URI complex members PFDN2, PFDN6, PDRG1, UXT and URI1 as well as ASDURF, POLR2E and DNAAF10/WDR92.

The protein resides in the cytoplasm. May play a role in chaperone-mediated protein folding. This chain is p53 and DNA damage-regulated protein 1 (PDRG1), found in Bos taurus (Bovine).